The chain runs to 316 residues: Biotin synthase (316 aa).

The region spanning 36 to 264 (TEIQISTLLS…ASRVRLAAGR (229 aa)) is the Radical SAM core domain. Cys51, Cys55, and Cys58 together coordinate [4Fe-4S] cluster. [2Fe-2S] cluster is bound by residues Cys96, Cys127, Cys187, and Arg259.

The protein belongs to the radical SAM superfamily. Biotin synthase family. Homodimer. The cofactor is [4Fe-4S] cluster. [2Fe-2S] cluster is required as a cofactor.

It carries out the reaction (4R,5S)-dethiobiotin + (sulfur carrier)-SH + 2 reduced [2Fe-2S]-[ferredoxin] + 2 S-adenosyl-L-methionine = (sulfur carrier)-H + biotin + 2 5'-deoxyadenosine + 2 L-methionine + 2 oxidized [2Fe-2S]-[ferredoxin]. The protein operates within cofactor biosynthesis; biotin biosynthesis; biotin from 7,8-diaminononanoate: step 2/2. In terms of biological role, catalyzes the conversion of dethiobiotin (DTB) to biotin by the insertion of a sulfur atom into dethiobiotin via a radical-based mechanism. This Gluconacetobacter diazotrophicus (strain ATCC 49037 / DSM 5601 / CCUG 37298 / CIP 103539 / LMG 7603 / PAl5) protein is Biotin synthase.